Here is a 127-residue protein sequence, read N- to C-terminus: Protein NEGATIVE REGULATOR OF RESISTANCE (127 aa).

2 disordered regions span residues 1–28 and 47–127; these read MDATTTAKRKRPAASDIADDAPTTVDEV and TRRL…RAPA. Residues 112–127 show a composition bias toward low complexity; that stretch reads PPSDAPATPRSARAPA.

It belongs to the NPR1-interactor family. As to quaternary structure, interacts with NPR1/NH1. Interacts with NPR3/NH3.

The protein resides in the nucleus. Functionally, acts as a negative regulator of disease resistance. Acts on basal resistance, age-related resistance and resistance mediated by the LRR receptor kinase XA21. Plants over-expressing NRR display enhanced susceptibility to the bacterial blight Xanthomonas oryzae pv. oryzae (Xoo). Binds to and represses NPR1/NH1-mediated transcriptional activation of LG2 in vitro. This Oryza sativa subsp. japonica (Rice) protein is Protein NEGATIVE REGULATOR OF RESISTANCE.